Reading from the N-terminus, the 156-residue chain is MALEKSLALLPLLVLVLLVLGWVQPSLGKESRAQKFQRQHMDSDGSPSSNPTYCNNMMRRRNMTQGRCKPVNTFVHEPLVDVQDVCFQEKVTCKNGQPNCYKSSSSMRITDCRLTNGSRYPNCAYRTSQKERHIIVACEGNPYVPVHFDASVEDST.

Residues M1 to G28 form the signal peptide. Residues A33 to S43 are compositionally biased toward basic and acidic residues. A disordered region spans residues A33–T52. Residues K35 and R38 each contribute to the substrate site. The active-site Proton acceptor is the H40. Intrachain disulfides connect C54-C112, C68-C123, C86-C138, and C93-C100. N-linked (GlcNAc...) asparagine glycosylation is present at N62. Substrate-binding positions include K69–T73, K94, and R113. A glycan (N-linked (GlcNAc...) asparagine) is linked at N116. The active-site Proton donor is H147.

This sequence belongs to the pancreatic ribonuclease family. As to quaternary structure, monomer. Interacts with and forms tight 1:1 complexes with RNH1. Dimerization of two such complexes may occur. Interaction with RNH1 inhibits this protein.

It is found in the secreted. It catalyses the reaction an [RNA] containing cytidine + H2O = an [RNA]-3'-cytidine-3'-phosphate + a 5'-hydroxy-ribonucleotide-3'-[RNA].. The enzyme catalyses an [RNA] containing uridine + H2O = an [RNA]-3'-uridine-3'-phosphate + a 5'-hydroxy-ribonucleotide-3'-[RNA].. Functionally, endonuclease that catalyzes the cleavage of RNA on the 3' side of pyrimidine nucleotides. Acts on single-stranded and double-stranded RNA. In Saguinus oedipus (Cotton-top tamarin), this protein is Ribonuclease pancreatic (RNASE1).